The sequence spans 617 residues: MSLKLNKYSILELIDTPTELRQLTENKLQTLCSELRLFLLNSVSKSSGHFASGLGTIELTVALHYVYNTPFDHLIWDVGHQAYPHKILTGRKNRIYSIRQRHGLHSFPCRNESKYDVLSVGHSSTSISAGLGLAIASEREKLNRRTVCIIGDGALTAGMAFEAINHAGTIKSNLLIILNDNNMSISENVGALHTQCPQQKKYTNITSDIKKIINSNIYNKNKNTSTAIALFSNLGFNCTGPIDGHNILTLIHNLKNIRNTKTGPQFLHVITKKGYGYKPAEKDPIKWHAVPKFNLKSGILSTNKNIKYTTYSKIFGDWLCQTAMHDNKIIGITPAMREGSGMNKFAQKYPKQYFDVAIAEQHAVTFSAGLAIAGYKPVVAIYSTFLQRAYDQIIHDIAIQKLPVLFAVDRGGIVGSDGETHQGAFDLSYLRCIPNLIIMTPSNAYECKLMLHTGYHYQYGPSVVRYPKGCATNNILYPYNNTTSLYSIPLSKGIIHHQGQHIAILNFGTLLKPAYNVALQLNATLVDMRFVKPLDEMLIKKLTENHQAFITLEENSIIGGAGSGVNEFLVQNKLLIPTLNIGLPDFFIPQGAQREMLSELGLDSQGIYKKIVRWIKI.

Thiamine diphosphate is bound by residues H80 and 121 to 123 (GHS). Residue D152 participates in Mg(2+) binding. Thiamine diphosphate-binding positions include 153 to 154 (GA), N181, Y277, and E360. N181 is a Mg(2+) binding site.

The protein belongs to the transketolase family. DXPS subfamily. In terms of assembly, homodimer. Mg(2+) serves as cofactor. The cofactor is thiamine diphosphate.

The catalysed reaction is D-glyceraldehyde 3-phosphate + pyruvate + H(+) = 1-deoxy-D-xylulose 5-phosphate + CO2. Its pathway is metabolic intermediate biosynthesis; 1-deoxy-D-xylulose 5-phosphate biosynthesis; 1-deoxy-D-xylulose 5-phosphate from D-glyceraldehyde 3-phosphate and pyruvate: step 1/1. In terms of biological role, catalyzes the acyloin condensation reaction between C atoms 2 and 3 of pyruvate and glyceraldehyde 3-phosphate to yield 1-deoxy-D-xylulose-5-phosphate (DXP). This is 1-deoxy-D-xylulose-5-phosphate synthase from Blochmanniella floridana.